A 552-amino-acid chain; its full sequence is Putative transport protein APL_0966 (552 aa).

A run of 5 helical transmembrane segments spans residues isoleucine 4 to isoleucine 24, valine 29 to leucine 49, phenylalanine 65 to serine 85, glycine 95 to phenylalanine 115, and isoleucine 161 to phenylalanine 181. 2 consecutive RCK C-terminal domains span residues glutamine 190–glutamate 275 and alanine 277–aspartate 360. The next 6 helical transmembrane spans lie at methionine 370–isoleucine 390, alanine 402–phenylalanine 424, isoleucine 438–leucine 458, leucine 463–valine 483, tyrosine 492–alanine 512, and valine 529–tryptophan 549.

This sequence belongs to the AAE transporter (TC 2.A.81) family. YidE subfamily.

The protein localises to the cell membrane. This chain is Putative transport protein APL_0966, found in Actinobacillus pleuropneumoniae serotype 5b (strain L20).